The following is a 354-amino-acid chain: Uroporphyrinogen decarboxylase (354 aa).

Substrate contacts are provided by residues 27-31 (RQAGR), aspartate 77, tyrosine 154, threonine 209, and histidine 327.

It belongs to the uroporphyrinogen decarboxylase family. As to quaternary structure, homodimer.

The protein localises to the cytoplasm. The catalysed reaction is uroporphyrinogen III + 4 H(+) = coproporphyrinogen III + 4 CO2. It functions in the pathway porphyrin-containing compound metabolism; protoporphyrin-IX biosynthesis; coproporphyrinogen-III from 5-aminolevulinate: step 4/4. Functionally, catalyzes the decarboxylation of four acetate groups of uroporphyrinogen-III to yield coproporphyrinogen-III. The protein is Uroporphyrinogen decarboxylase of Actinobacillus pleuropneumoniae serotype 5b (strain L20).